Here is a 437-residue protein sequence, read N- to C-terminus: 5-hydroxytryptamine receptor 3B (437 aa).

The N-terminal stretch at 1-21 is a signal peptide; that stretch reads MILLWSCLLVAVVGILGTATP. Over 22–235 the chain is Extracellular; sequence QPGNSSLHRL…RFNVVIRRCP (214 aa). Asparagine 25, asparagine 92, and asparagine 134 each carry an N-linked (GlcNAc...) asparagine glycan. Cysteines 151 and 165 form a disulfide. A helical transmembrane segment spans residues 236–255; sequence LAYVVSLLIPSIFLMLVDLG. The Cytoplasmic portion of the chain corresponds to 256–266; that stretch reads SFYLPPNCRAR. Residues 267–284 traverse the membrane as a helical segment; it reads IVFKTNVLVGYTVFRVNM. The Extracellular portion of the chain corresponds to 285 to 295; the sequence is SDEVPRSAGCT. A helical transmembrane segment spans residues 296–324; sequence SLIGVFFTVCMALLVLSLSKSILLIKFLY. At 325–410 the chain is on the cytoplasmic side; that stretch reads EERHSEQERP…WLAILCHFDQ (86 aa). The HA-stretch; determines single-channel conductance in 5-HT3 receptors stretch occupies residues 377–409; sequence FWFQLQSINNSLRTRDQVYQKEVEWLAILCHFD. The helical transmembrane segment at 411 to 434 threads the bilayer; sequence LLFRIYLAVLGLYTVTLCSLWALW. The Extracellular portion of the chain corresponds to 435 to 437; it reads SRM.

This sequence belongs to the ligand-gated ion channel (TC 1.A.9) family. 5-hydroxytryptamine receptor (TC 1.A.9.2) subfamily. HTR3B sub-subfamily. As to quaternary structure, forms homopentameric as well as heteropentameric serotonin-activated cation-selective channel complexes with HTR3A. The homomeric complex is not functional. Heteropentameric complexes display properties which resemble that of neuronal serotonin-activated channels in vivo. In terms of processing, N-glycosylation is required for membrane localization. As to expression, expressed in peripheral neurons, but not in neurons of the central nervous system.

Its subcellular location is the postsynaptic cell membrane. The protein resides in the cell membrane. The enzyme catalyses Na(+)(in) = Na(+)(out). It catalyses the reaction K(+)(in) = K(+)(out). It carries out the reaction Ca(2+)(in) = Ca(2+)(out). Its function is as follows. Forms serotonin (5-hydroxytryptamine/5-HT3)-activated cation-selective channel complexes, which when activated cause fast, depolarizing responses in neurons. The polypeptide is 5-hydroxytryptamine receptor 3B (Rattus norvegicus (Rat)).